The chain runs to 466 residues: UPF0652 protein C16A11.03c (466 aa).

This sequence belongs to the UPF0652 family.

It is found in the cytoplasm. The protein resides in the nucleus. This Schizosaccharomyces pombe (strain 972 / ATCC 24843) (Fission yeast) protein is UPF0652 protein C16A11.03c.